The sequence spans 447 residues: UPF0210 protein Ldb1026 (447 aa).

Belongs to the UPF0210 family. In terms of assembly, homodimer.

This Lactobacillus delbrueckii subsp. bulgaricus (strain ATCC 11842 / DSM 20081 / BCRC 10696 / JCM 1002 / NBRC 13953 / NCIMB 11778 / NCTC 12712 / WDCM 00102 / Lb 14) protein is UPF0210 protein Ldb1026.